Consider the following 122-residue polypeptide: Large ribosomal subunit protein uL14 (122 aa).

The protein belongs to the universal ribosomal protein uL14 family. As to quaternary structure, part of the 50S ribosomal subunit. Forms a cluster with proteins L3 and L19. In the 70S ribosome, L14 and L19 interact and together make contacts with the 16S rRNA in bridges B5 and B8.

Its function is as follows. Binds to 23S rRNA. Forms part of two intersubunit bridges in the 70S ribosome. The sequence is that of Large ribosomal subunit protein uL14 from Lacticaseibacillus casei (strain BL23) (Lactobacillus casei).